Reading from the N-terminus, the 113-residue chain is Gamma-glutamylcyclotransferase family protein YtfP (113 aa).

Belongs to the gamma-glutamylcyclotransferase family.

The protein is Gamma-glutamylcyclotransferase family protein YtfP (ytfP) of Escherichia coli O157:H7.